Consider the following 532-residue polypeptide: MSVLAGVEASGIARNYVFKNWAGIYSARPRLYFQPRSEDEVVAIVRAAREQGRTIVTVGSGHSPSDMCATDDWMVNLDRLNGVLELQEDEQGRYADVTVAAGIRVYELHRYLSARGYALQNLGSISEQSVGGIISTGTHGSSPYHGLVSSQYVNLTLVNGRGELVFLDSEHEPEVFRAAMLSLGKLGIIVRATIRVVPAFNIHSTQEVINFETLLDNWETIWTSSEFIRCWWYPYVRKCVLWRGVKTSEPAEKSRSSWWGTTLGRLVYESLLWLTVNVYPSLTPFVERFIFRQQYGKVETFGNGDEAVQTSIDGLNMDCLFSQFVDEWACPLNNGPEVLRSLDHSIAQAAQNKEFFVHVPIEVRCSNTTLPHEYKCPEDRTVTAPGPVYGNLLRPYLDNTPSHLRYAPLSDVTNSQLTLYINATIYRPFGTNTPIHKWFTLFEDTLGAAGGKPHWAKNFLGSTATAAGPVKSSDEYQDYEMRGMATKIKEWYGDNLKQFQKVRREQDPHNVFIANKDWAVKNGIIDIDELDS.

In terms of domain architecture, FAD-binding PCMH-type spans 25 to 199 (YSARPRLYFQ…VRATIRVVPA (175 aa)). His-62 carries the post-translational modification Pros-8alpha-FAD histidine.

Belongs to the oxygen-dependent FAD-linked oxidoreductase family. Requires FAD as cofactor.

Its subcellular location is the mitochondrion membrane. It catalyses the reaction D-arabinono-1,4-lactone + O2 = dehydro-D-arabinono-1,4-lactone + H2O2 + H(+). Its pathway is cofactor biosynthesis; D-erythroascorbate biosynthesis; dehydro-D-arabinono-1,4-lactone from D-arabinose: step 2/2. This Eremothecium gossypii (strain ATCC 10895 / CBS 109.51 / FGSC 9923 / NRRL Y-1056) (Yeast) protein is D-arabinono-1,4-lactone oxidase (ALO1).